The sequence spans 350 residues: Renin receptor (350 aa).

Positions 1-17 are cleaved as a signal peptide; the sequence is MAVLVVLLSSLVSSALA. The Extracellular portion of the chain corresponds to 18-302; sequence NEFSILRSPG…YNLAYKYNLE (285 aa). The chain crosses the membrane as a helical span at residues 303–323; sequence YSVVFNLVLWIMTGLALAVII. Residues 324–350 lie on the Cytoplasmic side of the membrane; it reads TSYNIWNMDPGYDSIIYRMTNQKIRMD. Residues 346–350 carry the Mediates retrograde transport to the ER motif; that stretch reads KIRMD.

In terms of assembly, interacts with renin. Accessory component of the multisubunit proton-transporting vacuolar (V)-ATPase protein pump. Interacts (via N-terminus) with ATP6AP1 (via N-terminus). Interacts with ATP6V0D1; ATP6V0D1 is a V-ATPase complex subunit and the interaction promotes V-ATPase complex assembly. Interacts with TMEM9; TMEM9 is a V-ATPase assembly regulator and the interaction induces the interaction with ATP6V0D1. Interacts with VMA21 (via N-terminus); VMA21 is a V-ATPase accessory component. In terms of processing, phosphorylated. Post-translationally, proteolytically cleaved by a furin-like convertase in the trans-Golgi network to generate N- and C-terminal fragments. As to expression, expressed in the brain.

The protein resides in the endoplasmic reticulum membrane. It localises to the lysosome membrane. It is found in the cytoplasmic vesicle. Its subcellular location is the autophagosome membrane. The protein localises to the cell projection. The protein resides in the dendritic spine membrane. It localises to the axon. It is found in the endosome membrane. Its subcellular location is the clathrin-coated vesicle membrane. The protein localises to the secretory vesicle. The protein resides in the synaptic vesicle membrane. Its function is as follows. Multifunctional protein which functions as a renin, prorenin cellular receptor and is involved in the assembly of the lysosomal proton-transporting V-type ATPase (V-ATPase) and the acidification of the endo-lysosomal system. May mediate renin-dependent cellular responses by activating ERK1 and ERK2. By increasing the catalytic efficiency of renin in AGT/angiotensinogen conversion to angiotensin I, may also play a role in the renin-angiotensin system (RAS). Through its function in V-type ATPase (v-ATPase) assembly and acidification of the lysosome it regulates protein degradation and may control different signaling pathways important for proper brain development, synapse morphology and synaptic transmission. This is Renin receptor (Atp6ap2) from Rattus norvegicus (Rat).